Consider the following 168-residue polypeptide: 2-C-methyl-D-erythritol 2,4-cyclodiphosphate synthase (168 aa).

A divalent metal cation-binding residues include aspartate 8 and histidine 10. 4-CDP-2-C-methyl-D-erythritol 2-phosphate-binding positions include 8–10 and 34–35; these read DLH and HS. Histidine 42 lines the a divalent metal cation pocket. 4-CDP-2-C-methyl-D-erythritol 2-phosphate contacts are provided by residues 56 to 58, 61 to 65, 132 to 135, and arginine 142; these read DIG, FPDTD, and TTTE.

It belongs to the IspF family. As to quaternary structure, homotrimer. It depends on a divalent metal cation as a cofactor.

The catalysed reaction is 4-CDP-2-C-methyl-D-erythritol 2-phosphate = 2-C-methyl-D-erythritol 2,4-cyclic diphosphate + CMP. The protein operates within isoprenoid biosynthesis; isopentenyl diphosphate biosynthesis via DXP pathway; isopentenyl diphosphate from 1-deoxy-D-xylulose 5-phosphate: step 4/6. In terms of biological role, involved in the biosynthesis of isopentenyl diphosphate (IPP) and dimethylallyl diphosphate (DMAPP), two major building blocks of isoprenoid compounds. Catalyzes the conversion of 4-diphosphocytidyl-2-C-methyl-D-erythritol 2-phosphate (CDP-ME2P) to 2-C-methyl-D-erythritol 2,4-cyclodiphosphate (ME-CPP) with a corresponding release of cytidine 5-monophosphate (CMP). The sequence is that of 2-C-methyl-D-erythritol 2,4-cyclodiphosphate synthase from Desulfosudis oleivorans (strain DSM 6200 / JCM 39069 / Hxd3) (Desulfococcus oleovorans).